Here is a 158-residue protein sequence, read N- to C-terminus: Small ribosomal subunit protein uS7 (158 aa).

The protein belongs to the universal ribosomal protein uS7 family. In terms of assembly, part of the 30S ribosomal subunit. Contacts proteins S9 and S11.

Its function is as follows. One of the primary rRNA binding proteins, it binds directly to 16S rRNA where it nucleates assembly of the head domain of the 30S subunit. Is located at the subunit interface close to the decoding center, probably blocks exit of the E-site tRNA. This is Small ribosomal subunit protein uS7 from Christiangramia forsetii (strain DSM 17595 / CGMCC 1.15422 / KT0803) (Gramella forsetii).